The chain runs to 203 residues: Cytochrome c biogenesis CcmF N-terminal-like mitochondrial protein 2 (203 aa).

2 consecutive transmembrane segments (helical) span residues 44–64 (IWIL…SWWA) and 143–163 (IFLW…FYQM).

The protein belongs to the CcmF/CycK/Ccl1/NrfE/CcsA family. Interacts with CCMFC, CCMFN1, CCMH and CYTC-1.

It localises to the mitochondrion inner membrane. Its function is as follows. Forms a complex with CCMFC, CCMFN1 and CCMH that performs the assembly of heme with c-type apocytochromes in mitochondria. This chain is Cytochrome c biogenesis CcmF N-terminal-like mitochondrial protein 2, found in Arabidopsis thaliana (Mouse-ear cress).